Reading from the N-terminus, the 521-residue chain is Signal recognition particle protein (521 aa).

GTP is bound by residues 107–114, 196–200, and 254–257; these read GLQGSGKT, DTAGR, and TKLD. Residues 436–505 form a disordered region; the sequence is GGMGIPGMGR…MPDGLNELPP (70 aa). A compositionally biased stretch (basic residues) spans 447–462; sequence SATRKSKGGKGKKRAR.

The protein belongs to the GTP-binding SRP family. SRP54 subfamily. In terms of assembly, part of the signal recognition particle protein translocation system, which is composed of SRP and FtsY.

Its subcellular location is the cytoplasm. The enzyme catalyses GTP + H2O = GDP + phosphate + H(+). Involved in targeting and insertion of nascent membrane proteins into the cytoplasmic membrane. Binds to the hydrophobic signal sequence of the ribosome-nascent chain (RNC) as it emerges from the ribosomes. The SRP-RNC complex is then targeted to the cytoplasmic membrane where it interacts with the SRP receptor FtsY. In Mycobacterium leprae (strain TN), this protein is Signal recognition particle protein.